Here is a 215-residue protein sequence, read N- to C-terminus: Probable transaldolase (215 aa).

The Schiff-base intermediate with substrate role is filled by K83.

This sequence belongs to the transaldolase family. Type 3B subfamily.

Its subcellular location is the cytoplasm. It carries out the reaction D-sedoheptulose 7-phosphate + D-glyceraldehyde 3-phosphate = D-erythrose 4-phosphate + beta-D-fructose 6-phosphate. It functions in the pathway carbohydrate degradation; pentose phosphate pathway; D-glyceraldehyde 3-phosphate and beta-D-fructose 6-phosphate from D-ribose 5-phosphate and D-xylulose 5-phosphate (non-oxidative stage): step 2/3. Functionally, transaldolase is important for the balance of metabolites in the pentose-phosphate pathway. The chain is Probable transaldolase from Streptococcus agalactiae serotype III (strain NEM316).